Here is a 293-residue protein sequence, read N- to C-terminus: Putative ribose uptake protein RbsU (293 aa).

Transmembrane regions (helical) follow at residues 2 to 24 (SIVA…TVAS), 34 to 56 (IIGA…SSGF), 63 to 80 (LFAL…IITF), 95 to 117 (TTAF…WPGI), 122 to 139 (IGFT…MTVW), 154 to 171 (AVVL…YSAA), 180 to 202 (LTAF…FMNM), 212 to 234 (ITWL…LISA), 241 to 263 (LATG…IYFL), and 273 to 292 (VITI…TVFI).

This sequence belongs to the GRP transporter (TC 2.A.7.5) family.

Its subcellular location is the cell membrane. Its function is as follows. Could be involved in the uptake of ribose. The protein is Putative ribose uptake protein RbsU (rbsU) of Staphylococcus aureus (strain Mu50 / ATCC 700699).